An 89-amino-acid polypeptide reads, in one-letter code: MSLSTEATAKIVSEFGRDANDTGSTEVQVALLTAQINHLQGHFAEHKKDHHSRRGLLRMVSQRRKLLDYLKRKDVARYTRLIERLGLRR.

This sequence belongs to the universal ribosomal protein uS15 family. As to quaternary structure, part of the 30S ribosomal subunit. Forms a bridge to the 50S subunit in the 70S ribosome, contacting the 23S rRNA.

Functionally, one of the primary rRNA binding proteins, it binds directly to 16S rRNA where it helps nucleate assembly of the platform of the 30S subunit by binding and bridging several RNA helices of the 16S rRNA. Forms an intersubunit bridge (bridge B4) with the 23S rRNA of the 50S subunit in the ribosome. This is Small ribosomal subunit protein uS15 from Escherichia coli O157:H7.